A 158-amino-acid chain; its full sequence is Large ribosomal subunit protein uL16 (158 aa).

Residues 1–22 (MLSPKRTKYRKQQRGRMKGKAT) are disordered.

The protein belongs to the universal ribosomal protein uL16 family. As to quaternary structure, part of the 50S ribosomal subunit.

Its function is as follows. Binds 23S rRNA and is also seen to make contacts with the A and possibly P site tRNAs. The sequence is that of Large ribosomal subunit protein uL16 from Synechococcus sp. (strain JA-3-3Ab) (Cyanobacteria bacterium Yellowstone A-Prime).